Reading from the N-terminus, the 935-residue chain is MARWGAARMAACGPWGRNRRVGAGDAFEASEVRRDGRSRMMPACGPWGAGHGGGDPALERELSRDGSHYSISSAILPSLGARSNRRIKLRRFIISPYDRRYRIWETFLIVLVVYSAWVSPFEFGFIPKPTGALATADNVVNAFFAVDIILTFFVAYLDKMSYMLEDDPKKIAWRYSTTWLVLDVASTIPSEFARRILPSKLRSYGFFNMLRLWRLRRVSSLFSRLEKDRHFNYFWVRCAKLICVTLFAVHCAACFYYLLADRYPVPTSTWIGNYMADFHERSLWIRYVTSVYWSITTLTTVGYGDLHAENTREMIFNIFYMLFNLGLTAYLIGNMTNLVVHGTSRTRNYRDTIQAATSFGVRNQLPPRLQDQMISHISLKYRTDSEGLQQQEILDSLPKAIKSSISQYLFFHLVQNVYLFQGVSNDLIFQLVSEMKAEYFPPREDVILQNEAPTDFYILVSGSVELVEQQNGADQVIQVATSGEVVGEIGVLCYRPQLFTVRTRSLCQLLRLNRTAFLSIVQSNVGDGTIIMNNLIQFLKEQKENSVMAGVVKEIESMLARGNLDLPITLCFAVTRGDDFLLHQLLKRGMDPNESDNDGHTALHIAASKGNEQCVRLLLEYGADPNARDSEGKVPLWEALCEKHAAVVQLLVEGGADLSSGDTGLYACIAVEESDTELLNDIIHYGGDVNRARRDGTTALHRAVCDGNVQMAELLLEHGADIDKQDGNGWTPRALAEQQGHDDIQLLFRSRKAATASGHHHVPSSTTTRVAPAAAAASLIGRFNSEPMMKNMIHEDADLPSRVLPEKLRRKRVTFQNSLFGVISSSQAQRETDHPLSRGGLAATGSPNPSSGSRNAVIRVTISCPEKGNTAGKLVLLPQTLDMLLELGAKKFDFAPTKVLTVEGAEVDEVELIRDGDHLVLVSNEWDAEKMKGKS.

Over 1–106 (MARWGAARMA…YDRRYRIWET (106 aa)) the chain is Cytoplasmic. A helical membrane pass occupies residues 107–127 (FLIVLVVYSAWVSPFEFGFIP). Topologically, residues 128 to 136 (KPTGALATA) are extracellular. A helical transmembrane segment spans residues 137 to 157 (DNVVNAFFAVDIILTFFVAYL). Topologically, residues 158–178 (DKMSYMLEDDPKKIAWRYSTT) are cytoplasmic. The chain crosses the membrane as a helical span at residues 179 to 199 (WLVLDVASTIPSEFARRILPS). Residues 200 to 205 (KLRSYG) lie on the Extracellular side of the membrane. A helical; Voltage-sensor membrane pass occupies residues 206 to 226 (FFNMLRLWRLRRVSSLFSRLE). The Cytoplasmic segment spans residues 227–240 (KDRHFNYFWVRCAK). The helical transmembrane segment at 241-261 (LICVTLFAVHCAACFYYLLAD) threads the bilayer. Residues 262 to 288 (RYPVPTSTWIGNYMADFHERSLWIRYV) lie on the Extracellular side of the membrane. The pore-forming intramembrane region spans 289 to 308 (TSVYWSITTLTTVGYGDLHA). Residues 309 to 312 (ENTR) are Extracellular-facing. A helical membrane pass occupies residues 313-333 (EMIFNIFYMLFNLGLTAYLIG). Over 334–935 (NMTNLVVHGT…WDAEKMKGKS (602 aa)) the chain is Cytoplasmic. Residue 419 to 538 (LFQGVSNDLI…TIIMNNLIQF (120 aa)) coordinates a nucleoside 3',5'-cyclic phosphate. ANK repeat units lie at residues 565 to 594 (DLPI…DPNE), 598 to 627 (DGHT…DPNA), 631 to 660 (EGKV…DLSS), 662 to 691 (DTGL…DVNR), 695 to 724 (DGTT…DIDK), and 728 to 757 (NGWT…ATAS). The interval 826–854 (SQAQRETDHPLSRGGLAATGSPNPSSGSR) is disordered. The span at 845 to 854 (GSPNPSSGSR) shows a compositional bias: polar residues. Residues 859–935 (RVTISCPEKG…WDAEKMKGKS (77 aa)) form the KHA domain.

It belongs to the potassium channel family. Plant (TC 1.A.1.4) subfamily. The potassium channel is probably a homo- or heterotetrameric complex of pore-forming subunits. Expressed in roots and coleoptile of young seedlings.

It is found in the membrane. Functionally, highly selective inward-rectifying potassium channel that mediates potassium uptake by plant roots. Assuming opened or closed conformations in response to the voltage difference across the membrane, the channel is activated by hyperpolarization. May be a major salt-sensitive potassium channel in roots. This is Potassium channel AKT1 (AKT1) from Oryza sativa subsp. japonica (Rice).